The following is a 311-amino-acid chain: Thioredoxin reductase (311 aa).

FAD contacts are provided by residues 15–18, 37–44, Asn53, and Val86; these read SGPA and EGTQFGGA. A disulfide bridge connects residues Cys137 and Cys140. 5 residues coordinate NADP(+): Ser158, His177, Arg183, Ile240, and Tyr260. FAD contacts are provided by residues Asp280 and 287 to 290; that span reads RQAI. Residue Arg287 coordinates NADP(+).

The protein belongs to the class-II pyridine nucleotide-disulfide oxidoreductase family. As to quaternary structure, homodimer. Requires FAD as cofactor.

It localises to the cytoplasm. The enzyme catalyses [thioredoxin]-dithiol + NADP(+) = [thioredoxin]-disulfide + NADPH + H(+). This Mycolicibacterium smegmatis (Mycobacterium smegmatis) protein is Thioredoxin reductase.